We begin with the raw amino-acid sequence, 297 residues long: Mitochondrial citrate transporter A (297 aa).

Solcar repeat units lie at residues 12–91, 102–188, and 199–286; these read PSSL…LKSL, PKTV…LKQM, and LGTA…TMDA. 6 helical membrane passes run 18–31, 61–81, 99–119, 160–180, 192–212, and 251–272; these read IIAG…EIAI, SQWY…AGIR, ISGP…SLLA, FFQG…TRFS, YVAP…GIAG, and KDEG…LIMS.

It belongs to the mitochondrial carrier (TC 2.A.29) family.

The protein localises to the mitochondrion inner membrane. The enzyme catalyses citrate(in) + H(+)(in) = citrate(out) + H(+)(out). In terms of biological role, mitochondrial transporter that mediates citrate export from mitochondria to cytoplasm. Both ctpA, ctpB, and ctpD play important roles in citric acid transport across the mitochondrial membrane and function in a redundant manner. The protein is Mitochondrial citrate transporter A of Aspergillus niger (strain ATCC 1015 / CBS 113.46 / FGSC A1144 / LSHB Ac4 / NCTC 3858a / NRRL 328 / USDA 3528.7).